Consider the following 185-residue polypeptide: Ribosome-recycling factor (185 aa).

The segment at 140 to 166 (KRQEKDGDITEDEQRSLEKQVQKVTDD) is disordered.

Belongs to the RRF family.

The protein resides in the cytoplasm. Its function is as follows. Responsible for the release of ribosomes from messenger RNA at the termination of protein biosynthesis. May increase the efficiency of translation by recycling ribosomes from one round of translation to another. This Lactobacillus johnsonii (strain CNCM I-12250 / La1 / NCC 533) protein is Ribosome-recycling factor.